The primary structure comprises 219 residues: Lipid transferase CIDEB (219 aa).

T18 is modified (phosphothreonine). One can recognise a CIDE-N domain in the interval P34–P110.

The protein belongs to the CIDE family. Interacts with DFFA. Interacts with DFFB; inhibited by DFFB. Interacts with APOB. Interacts with PREB/SEC12; facilitating loading of SCAP-SREBP into COPII vesicles. In terms of tissue distribution, highly enriched in the liver.

The protein localises to the lipid droplet. Its subcellular location is the endoplasmic reticulum membrane. The protein resides in the golgi apparatus. It localises to the cytoplasmic vesicle. It is found in the COPI-coated vesicle. In terms of biological role, lipid transferase specifically expressed in hepatocytes, which promotes unilocular lipid droplet formation by mediating lipid droplet fusion. Lipid droplet fusion promotes their enlargement, restricting lipolysis and favoring lipid storage. Localizes on the lipid droplet surface, at focal contact sites between lipid droplets, and mediates atypical lipid droplet fusion by promoting directional net neutral lipid transfer from the smaller to larger lipid droplets. The transfer direction may be driven by the internal pressure difference between the contacting lipid droplet pair. Promotes lipid exchange and lipid droplet fusion in both small and large lipid droplet-containing hepatocytes. In addition to its role in lipid droplet fusion, also involved in cytoplasmic vesicle biogenesis and transport. Required for very-low-density lipoprotein (VLDL) lipidation and maturation. Probably involved in the biogenesis of VLDL transport vesicles by forming a COPII vesicle coat and facilitating the formation of endoplasmic reticulum-derived large vesicles. Also involved in sterol-regulated export of the SCAP-SREBP complex, composed of SCAP, SREBF1/SREBP1 and SREBF2/SREBP2, by promoting loading of SCAP-SREBP into COPII vesicles. May also activate apoptosis. The chain is Lipid transferase CIDEB from Mus musculus (Mouse).